The following is a 73-amino-acid chain: Translation initiation factor IF-1 (73 aa).

In terms of domain architecture, S1-like spans 1-73 (MSEKEAGIEV…SRGRITYRDK (73 aa)).

The protein belongs to the IF-1 family. In terms of assembly, component of the 30S ribosomal translation pre-initiation complex which assembles on the 30S ribosome in the order IF-2 and IF-3, IF-1 and N-formylmethionyl-tRNA(fMet); mRNA recruitment can occur at any time during PIC assembly.

It localises to the cytoplasm. Functionally, one of the essential components for the initiation of protein synthesis. Stabilizes the binding of IF-2 and IF-3 on the 30S subunit to which N-formylmethionyl-tRNA(fMet) subsequently binds. Helps modulate mRNA selection, yielding the 30S pre-initiation complex (PIC). Upon addition of the 50S ribosomal subunit IF-1, IF-2 and IF-3 are released leaving the mature 70S translation initiation complex. The chain is Translation initiation factor IF-1 from Anaeromyxobacter dehalogenans (strain 2CP-C).